A 574-amino-acid chain; its full sequence is Septation ring formation regulator EzrA (574 aa).

Topologically, residues 1-7 (MSSGIIL) are extracellular. Residues 8–26 (LIVAIVLLVIIAYLVGVII) form a helical membrane-spanning segment. Residues 27–574 (RKRNDTLITS…YEKTRERIRF (548 aa)) are Cytoplasmic-facing. Coiled-coil stretches lie at residues 102 to 131 (NFIRAKHEINSVESQLNLVEEDITAIREAL), 161 to 190 (ENEDNFGSTMAEIEKQMKNIEAEFSQFVAL), 276 to 379 (VTLD…QQEK), and 459 to 493 (QLEALMDELSRGRINIEAVSRLSEVATAAIANLEE).

The protein belongs to the EzrA family.

The protein resides in the cell membrane. Negative regulator of FtsZ ring formation; modulates the frequency and position of FtsZ ring formation. Inhibits FtsZ ring formation at polar sites. Interacts either with FtsZ or with one of its binding partners to promote depolymerization. This Streptococcus equi subsp. zooepidemicus (strain H70) protein is Septation ring formation regulator EzrA.